The following is a 309-amino-acid chain: NAD kinase (309 aa).

The active-site Proton acceptor is Asp-89. Residues 89-90, 163-164, His-174, Arg-191, Asp-193, and 204-209 each bind NAD(+); these read DG, NE, and TAYALS.

It belongs to the NAD kinase family. A divalent metal cation is required as a cofactor.

It localises to the cytoplasm. It carries out the reaction NAD(+) + ATP = ADP + NADP(+) + H(+). In terms of biological role, involved in the regulation of the intracellular balance of NAD and NADP, and is a key enzyme in the biosynthesis of NADP. Catalyzes specifically the phosphorylation on 2'-hydroxyl of the adenosine moiety of NAD to yield NADP. This is NAD kinase from Shewanella sp. (strain W3-18-1).